The primary structure comprises 352 residues: Thiamine-monophosphate kinase (352 aa).

3 residues coordinate Mg(2+): aspartate 58, threonine 73, and aspartate 75. Position 82 (histidine 82) interacts with substrate. Aspartate 103 and aspartate 151 together coordinate Mg(2+). ATP-binding positions include 150 to 151 (GD) and arginine 177. Residue aspartate 239 coordinates Mg(2+). An ATP-binding site is contributed by serine 241. Aspartate 242 is a binding site for Mg(2+). Substrate-binding residues include aspartate 294 and tryptophan 349.

It belongs to the thiamine-monophosphate kinase family.

The catalysed reaction is thiamine phosphate + ATP = thiamine diphosphate + ADP. The protein operates within cofactor biosynthesis; thiamine diphosphate biosynthesis; thiamine diphosphate from thiamine phosphate: step 1/1. In terms of biological role, catalyzes the ATP-dependent phosphorylation of thiamine-monophosphate (TMP) to form thiamine-pyrophosphate (TPP), the active form of vitamin B1. This Caulobacter vibrioides (strain ATCC 19089 / CIP 103742 / CB 15) (Caulobacter crescentus) protein is Thiamine-monophosphate kinase.